Here is a 305-residue protein sequence, read N- to C-terminus: Ribonuclease BN (305 aa).

Histidine 64, histidine 66, aspartate 68, histidine 69, histidine 141, aspartate 212, and histidine 270 together coordinate Zn(2+). Aspartate 68 acts as the Proton acceptor in catalysis.

It belongs to the RNase Z family. RNase BN subfamily. In terms of assembly, homodimer. The cofactor is Zn(2+).

In terms of biological role, zinc phosphodiesterase, which has both exoribonuclease and endoribonuclease activities. The chain is Ribonuclease BN from Citrobacter koseri (strain ATCC BAA-895 / CDC 4225-83 / SGSC4696).